Here is a 464-residue protein sequence, read N- to C-terminus: NADH dehydrogenase [ubiquinone] flavoprotein 1, mitochondrial (464 aa).

Residues 1-20 (MLAARRLLGGSLPSRVSVRF) constitute a mitochondrion transit peptide. Lys-81 carries the post-translational modification N6-acetyllysine; alternate. Position 81 is an N6-succinyllysine; alternate (Lys-81). 87 to 96 (GRGGAGFPTG) is a binding site for NADH. Lys-104 bears the N6-acetyllysine mark. 199–247 (RGAGAYICGEETALIESIEGKQGKPRLKPPFPADVGVFGCPTTVANVET) provides a ligand contact to FMN. Residue Arg-257 is modified to Omega-N-methylarginine. At Lys-375 the chain carries N6-acetyllysine. The [4Fe-4S] cluster site is built by Cys-379, Cys-382, Cys-385, and Cys-425.

Belongs to the complex I 51 kDa subunit family. As to quaternary structure, core subunit of respiratory chain NADH dehydrogenase (Complex I) which is composed of 45 different subunits. This is a component of the flavoprotein-sulfur (FP) fragment of the enzyme. Interacts with RAB5IF. FMN is required as a cofactor. The cofactor is [4Fe-4S] cluster.

The protein localises to the mitochondrion inner membrane. The enzyme catalyses a ubiquinone + NADH + 5 H(+)(in) = a ubiquinol + NAD(+) + 4 H(+)(out). Core subunit of the mitochondrial membrane respiratory chain NADH dehydrogenase (Complex I) which catalyzes electron transfer from NADH through the respiratory chain, using ubiquinone as an electron acceptor. Part of the peripheral arm of the enzyme, where the electrons from NADH are accepted by flavin mononucleotide (FMN) and then passed along a chain of iron-sulfur clusters by electron tunnelling to the final acceptor ubiquinone. Contains FMN, which is the initial electron acceptor as well as one iron-sulfur cluster. This chain is NADH dehydrogenase [ubiquinone] flavoprotein 1, mitochondrial, found in Macaca fascicularis (Crab-eating macaque).